Consider the following 335-residue polypeptide: E3 ubiquitin-protein ligase NLA (335 aa).

An SPX domain is found at 1–154 (MKFCKKYEEY…ESRQGQAFKT (154 aa)). The RING-type zinc-finger motif lies at 231–280 (CSICLDTVFDPISLTCGHIYCYMCACSAASVNVVDGLKTAEATEKCPLCR).

In terms of assembly, interacts with UBC8. Interacts with PHT1-1 and PHT1-4. Forms homodimers (via RING domain). Interacts with UBC24/PHO2. Interacts with NPF2.13/NRT1.7. Interacts with NAC92/ORE1. High expression in roots and stems, medium in seedlings, flowers, rosette and cauline leaves, and very low in siliques. Detected in cotyledons, hypocotyls, pedicel, receptacle, pistil, sepal, filament of stamen and at the two ends of developing siliques.

The protein resides in the nucleus speckle. The protein localises to the nucleus. It is found in the cell membrane. The enzyme catalyses S-ubiquitinyl-[E2 ubiquitin-conjugating enzyme]-L-cysteine + [acceptor protein]-L-lysine = [E2 ubiquitin-conjugating enzyme]-L-cysteine + N(6)-ubiquitinyl-[acceptor protein]-L-lysine.. Its pathway is protein modification; protein ubiquitination. E3 ubiquitin-protein ligase that mediates E2-dependent protein ubiquitination. Plays a role in salicylic acid-mediated negative feedback regulation of salicylic acid (SA) accumulation. May be involved in the overall regulation of SA, benzoic acid and phenylpropanoid biosynthesis. Involved in defense response. May act as negative regulator of resistance to the necrotrophic fungal pathogen Plectosphaerella cucumerina by modulating the accumulation of the phytoalexin camalexin and the salicylic acid- and jasmonate- dependent defense pathways. Controls the adaptability to nitrogen limitation by channeling the phenylpropanoid metabolic flux to the induced anthocyanin synthesis. Involved in the regulation of inorganic phosphate (Pi) homeostasis in a nitrate-dependent fashion. Directs the ubiquitination and subsequent degradation of the plasma membrane-localized inorganic phosphate transporters PHT1-1 and PHT1-4, to maintain phosphate homeostasis. The ubiquitination of PHTs triggers their clathrin-dependent endocytosis and trafficking to the vacuole through the endosomal pathway for degradation. Functions cooperatively with UBC24/PHO2 to regulate the abundance of PHT1-1, PHT1-2 and PHT1-3 in different subcellular compartments. Regulates Pi homeostasis by mediating, cooperatively with UBC24/PHO2, polyubiquitination of PHT1-4 and its targeting for degradation. Directs the polyubiquitination and subsequent degradation of the plasma membrane-localized nitrate transporter NPF2.13/NRT1.7, to help plants to adapt to nitrogen deficiency by regulating the source-to-sink remobilization of nitrate. Regulates leaf senescence during nitrogen deficiency by mediating, cooperatively with UBC24/PHO2, polyubiquitination of NAC92/ORE1 and its targeting for degradation. The polypeptide is E3 ubiquitin-protein ligase NLA (Arabidopsis thaliana (Mouse-ear cress)).